Here is a 365-residue protein sequence, read N- to C-terminus: G-protein coupled receptor 68 (365 aa).

The Extracellular segment spans residues 1–12 (MGNITTENSSLS). Asparagine 3 and asparagine 8 each carry an N-linked (GlcNAc...) asparagine glycan. A helical transmembrane segment spans residues 13–49 (CPIDHTIHQTLAPVVYVTVLVVGFPANCLSLYFGYLQ). Intrachain disulfides connect cysteine 13–cysteine 258 and cysteine 94–cysteine 172. The Cytoplasmic segment spans residues 50–53 (IKAR). A helical transmembrane segment spans residues 54–84 (NELGVYLCNLTIADLFYICSLPFWLQYVLQH). Topologically, residues 85 to 89 (DDWSH) are extracellular. Residues 90–125 (GDLSCQVCGILLYENIYISVGFLCCISIDRYLAVAH) form a helical membrane-spanning segment. Topologically, residues 126–133 (PFRFHQFR) are cytoplasmic. Residues 134 to 160 (TLKAAVGVSVLIWAKELLTSIYFLNHK) traverse the membrane as a helical segment. Residues 161-176 (EVIEDEDQHRVCFEHY) lie on the Extracellular side of the membrane. The interval 161–176 (EVIEDEDQHRVCFEHY) is extracellular loop 2 (ECL2). A helical transmembrane segment spans residues 177 to 214 (PIQAWQRSINYYRFLVGFLFPICLLLASYQGILRAVRR). At 215–218 (SHGT) the chain is on the cytoplasmic side. Residues 219–254 (QKSRKDQIQRLVLSTVVIFLACFLPYHVLLLVRSLW) traverse the membrane as a helical segment. The Extracellular portion of the chain corresponds to 255 to 260 (ERNCEF). Residues 261-289 (AKSIFNVYHFSLLLTSFNCVADPVLYCFV) form a helical membrane-spanning segment. The Cytoplasmic segment spans residues 290-365 (SETTHRDLAR…VGGPSTVGLA (76 aa)).

Belongs to the G-protein coupled receptor 1 family. As to expression, expressed in the lung, testis, heart, brain, spleen, thymus, brown fat, small intestine, colon, peripheral blood leukocytes, macrophages, stomach, ovary and white fat but not in the liver, kidney, and skeletal muscle. Expression in the prostate is weak but detectable. Specifically expressed in endothelial cells of small-diameter resistance arteries.

Its subcellular location is the cell membrane. Its activity is regulated as follows. Activated by a network of residues that connects an extracellular-facing cavity to Glu-149, a conserved charged residue buried in the transmembrane core of the receptor. Protonation likely drives conformational changes in extracellular loop 2 (ECL2), which stabilizes movement of transmembrane 3 (TM3) and a series of rearrangements that connect the extracellular-facing cavity to Glu-149, a residue only conserved in proton-sensing G-protein coupled receptors. Activated in an allosteric manner by divalent metal ions at the extracellular surface following the order: Cd(2+) &gt; Co(2+) &gt; Ni(2+) &gt; Zn(2+) &gt; Fe(2+) &gt; Ca(2+) &gt; Mg(2+). Activated by ogerin (ZINC67740571), a selective GPR68 positive allosteric modulator. Inhibited by small molecule GPR68-I, decreasing inflammation in models of colitis. Proton-sensing G-protein coupled receptor activated by extracellular pH, which is required to monitor pH changes and generate adaptive reactions. The receptor is almost silent at pH 7.8 but fully activated at pH 6.8. Ligand binding causes a conformation change that triggers signaling via guanine nucleotide-binding proteins (G proteins) and modulates the activity of downstream effectors, such as phospholipase C. GPR68 is mainly coupled to G(q) G proteins and mediates production of diacylglycerol (DAG) and inositol 1,4,5-trisphosphate (IP3). Acts as a key mechanosensor of fluid shear stress and membrane stretch. Expressed in endothelial cells of small-diameter resistance arteries, where it mediates flow-induced dilation in response to shear stress. May represents an osteoblastic pH sensor regulating cell-mediated responses to acidosis in bone. Acts as a regulator of calcium-sensing receptor CASR in a seesaw manner: GPR68-mediated signaling inhibits CASR signaling in response to protons, while CASR inhibits GPR68 in presence of extracellular calcium. Also functions as a metastasis suppressor gene in prostate cancer. The protein is G-protein coupled receptor 68 of Mus musculus (Mouse).